Consider the following 185-residue polypeptide: Ribosome-recycling factor (185 aa).

Belongs to the RRF family.

It is found in the cytoplasm. In terms of biological role, responsible for the release of ribosomes from messenger RNA at the termination of protein biosynthesis. May increase the efficiency of translation by recycling ribosomes from one round of translation to another. In Macrococcus caseolyticus (strain JCSC5402) (Macrococcoides caseolyticum), this protein is Ribosome-recycling factor.